Reading from the N-terminus, the 500-residue chain is Allene oxide synthase 3 (500 aa).

Residues methionine 1 to glycine 26 form a disordered region. Substrate-binding positions include phenylalanine 297 to asparagine 298, lysine 304, and proline 365 to phenylalanine 368. Cysteine 452 lines the heme pocket.

The protein belongs to the cytochrome P450 family. It depends on heme as a cofactor. Not expressed in dark-grown seedlings.

It catalyses the reaction (13S)-hydroperoxy-(9Z,11E,15Z)-octadecatrienoate = (9Z,13S,15Z)-12,13-epoxyoctadeca-9,11,15-trienoate + H2O. It participates in lipid metabolism; oxylipin biosynthesis. Involved in the biosynthesis of jasmonic acid, a growth regulator that is implicated also as a signaling molecule in plant defense. Converts 13-hydroperoxylinolenic acid to 12,13-epoxylinolenic acid. In Oryza sativa subsp. japonica (Rice), this protein is Allene oxide synthase 3 (CYP74A3).